A 2294-amino-acid chain; its full sequence is Protein Ycf2 (2294 aa).

1648–1655 (GSIGTGRS) is an ATP binding site.

This sequence belongs to the Ycf2 family.

It is found in the plastid. The protein resides in the chloroplast stroma. Its function is as follows. Probable ATPase of unknown function. Its presence in a non-photosynthetic plant (Epifagus virginiana) and experiments in tobacco indicate that it has an essential function which is probably not related to photosynthesis. This Arabidopsis thaliana (Mouse-ear cress) protein is Protein Ycf2.